The following is a 630-amino-acid chain: Peptidyl-prolyl cis-trans isomerase cyp15 (630 aa).

Residues Met-1 to Lys-46 form a disordered region. 5 WD repeats span residues Met-70–Val-108, Ser-113–Met-152, Tyr-157–His-198, Met-203–Asp-242, and Arg-258–Asp-301. Residues Leu-475 to Ile-629 form the PPIase cyclophilin-type domain.

This sequence belongs to the cyclophilin-type PPIase family.

The catalysed reaction is [protein]-peptidylproline (omega=180) = [protein]-peptidylproline (omega=0). In terms of biological role, PPIases accelerate the folding of proteins. It catalyzes the cis-trans isomerization of proline imidic peptide bonds in oligopeptides. This chain is Peptidyl-prolyl cis-trans isomerase cyp15 (cyp15), found in Rhizopus delemar (strain RA 99-880 / ATCC MYA-4621 / FGSC 9543 / NRRL 43880) (Mucormycosis agent).